A 343-amino-acid polypeptide reads, in one-letter code: Methionine import ATP-binding protein MetN 3 (343 aa).

In terms of domain architecture, ABC transporter spans 2 to 241; sequence IELSNITKVF…PKTPLAQKFI (240 aa). 38-45 serves as a coordination point for ATP; sequence GASGAGKS.

Belongs to the ABC transporter superfamily. Methionine importer (TC 3.A.1.24) family. As to quaternary structure, the complex is composed of two ATP-binding proteins (MetN), two transmembrane proteins (MetI) and a solute-binding protein (MetQ).

It localises to the cell inner membrane. The catalysed reaction is L-methionine(out) + ATP + H2O = L-methionine(in) + ADP + phosphate + H(+). The enzyme catalyses D-methionine(out) + ATP + H2O = D-methionine(in) + ADP + phosphate + H(+). In terms of biological role, part of the ABC transporter complex MetNIQ involved in methionine import. Responsible for energy coupling to the transport system. The polypeptide is Methionine import ATP-binding protein MetN 3 (Pectobacterium atrosepticum (strain SCRI 1043 / ATCC BAA-672) (Erwinia carotovora subsp. atroseptica)).